Here is a 132-residue protein sequence, read N- to C-terminus: Insulin-like 3 (132 aa).

An N-terminal signal peptide occupies residues 1-21 (MDRRPLTWALVLLGPALAIAL). Glutamine 27 bears the Pyrrolidone carboxylic acid mark. 3 cysteine pairs are disulfide-bonded: cysteine 34–cysteine 117, cysteine 46–cysteine 130, and cysteine 116–cysteine 121. The propeptide at 67–104 (LLRWLEGQHLLHGLMASGDPVLVLAPQPLPQASRHHHH) is c peptide like.

The protein belongs to the insulin family. Heterodimer of a B chain and an A chain linked by two disulfide bonds. 20% of B chains include an extra N-terminal pentapeptide. Expressed exclusively in Leydig cells of the testis.

It localises to the secreted. Functionally, seems to play a role in testicular function. May be a trophic hormone with a role in testicular descent in fetal life. Is a ligand for LGR8 receptor. This Bos taurus (Bovine) protein is Insulin-like 3 (INSL3).